The sequence spans 463 residues: Fumarate hydratase class II (463 aa).

Residues 98–100 (SGT), 129–132 (HPND), 139–141 (SSN), and Thr187 each bind substrate. Residue His188 is the Proton donor/acceptor of the active site. Residue Ser318 is part of the active site. Substrate-binding positions include Ser319 and 324–326 (KVN).

This sequence belongs to the class-II fumarase/aspartase family. Fumarase subfamily. In terms of assembly, homotetramer.

The protein localises to the cytoplasm. It carries out the reaction (S)-malate = fumarate + H2O. The protein operates within carbohydrate metabolism; tricarboxylic acid cycle; (S)-malate from fumarate: step 1/1. In terms of biological role, involved in the TCA cycle. Catalyzes the stereospecific interconversion of fumarate to L-malate. The polypeptide is Fumarate hydratase class II (Rickettsia bellii (strain RML369-C)).